The chain runs to 61 residues: UPF0434 protein TM1040_0056 (61 aa).

This sequence belongs to the UPF0434 family.

This chain is UPF0434 protein TM1040_0056, found in Ruegeria sp. (strain TM1040) (Silicibacter sp.).